We begin with the raw amino-acid sequence, 779 residues long: Probable ATP-dependent RNA helicase DHX40 (779 aa).

The tract at residues 1-28 is disordered; sequence MSRFPAVAGRAPRRQEEGERSRDLQEER. Positions 13–28 are enriched in basic and acidic residues; it reads RRQEEGERSRDLQEER. In terms of domain architecture, Helicase ATP-binding spans 63–231; sequence IQAVRDNSFL…FGNCPIFDIP (169 aa). ATP is bound at residue 76 to 83; sequence GNTGSGKT. The short motif at 173–176 is the DEAH box element; it reads DEAH. In terms of domain architecture, Helicase C-terminal spans 263 to 442; the sequence is TMDIHLNEMA…SVVLTLKCLA (180 aa). The interval 737-779 is disordered; that stretch reads SKDVLKKMQRRNDDKSISDARARFLERKQQRTQDHSDTRKETG.

It belongs to the DEAD box helicase family. DEAH subfamily. Ubiquitously expressed.

It catalyses the reaction ATP + H2O = ADP + phosphate + H(+). Probable ATP-dependent RNA helicase. This is Probable ATP-dependent RNA helicase DHX40 (DHX40) from Homo sapiens (Human).